Consider the following 399-residue polypeptide: Cytochrome P450 FAS1 (399 aa).

Cys-349 contributes to the heme binding site.

This sequence belongs to the cytochrome P450 family. It depends on heme as a cofactor.

It is found in the cytoplasm. Functionally, may be involved in the biosynthesis of cytokinin phytohormones and in host plant fasciation (leafy gall). The sequence is that of Cytochrome P450 FAS1 (fas1) from Rhodococcoides fascians (Rhodococcus fascians).